The chain runs to 903 residues: Chitin synthase 1 (903 aa).

The interval 1-154 is disordered; that stretch reads MDPRYGAQPQ…YQDQPQQGGG (154 aa). The segment covering 67 to 79 has biased composition (polar residues); sequence DHLNLNAAQSVDN. Asparagine 79 is a glycosylation site (N-linked (GlcNAc...) asparagine). Residues 100-117 show a composition bias toward low complexity; it reads YYNQPYEPRPQQQPYDQG. Polar residues predominate over residues 135-150; the sequence is HQPSDAPSEPYQDQPQ. 9 consecutive transmembrane segments (helical) span residues 444-464, 543-563, 573-593, 619-639, 654-674, 700-720, 729-749, 828-848, and 875-895; these read SAFG…YVAL, RWLN…LDFL, FAFF…WFAI, ILGV…FVLS, MCWF…FIAV, MLII…LIML, LVQY…YAFC, GVVL…LSSA, and IVLW…MWFL.

It belongs to the chitin synthase family. Class I subfamily.

It localises to the cell membrane. The enzyme catalyses [(1-&gt;4)-N-acetyl-beta-D-glucosaminyl](n) + UDP-N-acetyl-alpha-D-glucosamine = [(1-&gt;4)-N-acetyl-beta-D-glucosaminyl](n+1) + UDP + H(+). In terms of biological role, polymerizes chitin, a structural polymer of the cell wall and septum, by transferring the sugar moiety of UDP-GlcNAc to the non-reducing end of the growing chitin polymer. Plays an important role in nuclear sorting or distribution. The sequence is that of Chitin synthase 1 from Fusarium oxysporum f. sp. lycopersici (strain 4287 / CBS 123668 / FGSC 9935 / NRRL 34936) (Fusarium vascular wilt of tomato).